We begin with the raw amino-acid sequence, 65 residues long: Large ribosomal subunit protein bL35 (65 aa).

Positions 1-11 are enriched in basic residues; it reads MPKIKTRRSAA. The segment at 1–25 is disordered; that stretch reads MPKIKTRRSAAKRFSVTGSGKFRRR.

This sequence belongs to the bacterial ribosomal protein bL35 family.

The protein is Large ribosomal subunit protein bL35 of Nitratidesulfovibrio vulgaris (strain ATCC 29579 / DSM 644 / CCUG 34227 / NCIMB 8303 / VKM B-1760 / Hildenborough) (Desulfovibrio vulgaris).